The chain runs to 97 residues: MSNISKETVEKVANLAKLEVSETEATAFAGQLGKIIELVEQLNTLDTTNVEPTSHAIDVSNVLREDVATKGLDRKEVLKNAPDEQDGMFKVPTIMEQ.

This sequence belongs to the GatC family. As to quaternary structure, heterotrimer of A, B and C subunits.

It catalyses the reaction L-glutamyl-tRNA(Gln) + L-glutamine + ATP + H2O = L-glutaminyl-tRNA(Gln) + L-glutamate + ADP + phosphate + H(+). The catalysed reaction is L-aspartyl-tRNA(Asn) + L-glutamine + ATP + H2O = L-asparaginyl-tRNA(Asn) + L-glutamate + ADP + phosphate + 2 H(+). Its function is as follows. Allows the formation of correctly charged Asn-tRNA(Asn) or Gln-tRNA(Gln) through the transamidation of misacylated Asp-tRNA(Asn) or Glu-tRNA(Gln) in organisms which lack either or both of asparaginyl-tRNA or glutaminyl-tRNA synthetases. The reaction takes place in the presence of glutamine and ATP through an activated phospho-Asp-tRNA(Asn) or phospho-Glu-tRNA(Gln). The sequence is that of Aspartyl/glutamyl-tRNA(Asn/Gln) amidotransferase subunit C from Listeria monocytogenes serotype 4b (strain CLIP80459).